We begin with the raw amino-acid sequence, 295 residues long: GTPase Era (295 aa).

The region spanning 7 to 176 (KTVSVCIIGR…ITSKAKIAPW (170 aa)) is the Era-type G domain. Residues 15 to 22 (GRPNSGKS) are G1. 15–22 (GRPNSGKS) lines the GTP pocket. A G2 region spans residues 41–45 (QTTRS). The interval 62-65 (DTPG) is G3. Residues 62-66 (DTPGI) and 124-127 (NKID) contribute to the GTP site. The segment at 124–127 (NKID) is G4. Residues 152 to 154 (ISA) are G5. In terms of domain architecture, KH type-2 spans 204 to 281 (LQQELPYKLT…HLFLFVKVRE (78 aa)).

The protein belongs to the TRAFAC class TrmE-Era-EngA-EngB-Septin-like GTPase superfamily. Era GTPase family. In terms of assembly, monomer.

It localises to the cytoplasm. Its subcellular location is the cell inner membrane. In terms of biological role, an essential GTPase that binds both GDP and GTP, with rapid nucleotide exchange. Plays a role in 16S rRNA processing and 30S ribosomal subunit biogenesis and possibly also in cell cycle regulation and energy metabolism. The sequence is that of GTPase Era from Rickettsia bellii (strain OSU 85-389).